A 535-amino-acid chain; its full sequence is Glucose-6-phosphate isomerase (535 aa).

Catalysis depends on glutamate 359, which acts as the Proton donor. Catalysis depends on residues histidine 390 and lysine 505.

The protein belongs to the GPI family.

It is found in the cytoplasm. It carries out the reaction alpha-D-glucose 6-phosphate = beta-D-fructose 6-phosphate. The protein operates within carbohydrate biosynthesis; gluconeogenesis. It participates in carbohydrate degradation; glycolysis; D-glyceraldehyde 3-phosphate and glycerone phosphate from D-glucose: step 2/4. In terms of biological role, catalyzes the reversible isomerization of glucose-6-phosphate to fructose-6-phosphate. The sequence is that of Glucose-6-phosphate isomerase from Treponema pallidum (strain Nichols).